The following is a 141-amino-acid chain: Large ribosomal subunit protein uL11 (141 aa).

This sequence belongs to the universal ribosomal protein uL11 family. Part of the ribosomal stalk of the 50S ribosomal subunit. Interacts with L10 and the large rRNA to form the base of the stalk. L10 forms an elongated spine to which L12 dimers bind in a sequential fashion forming a multimeric L10(L12)X complex. In terms of processing, one or more lysine residues are methylated.

In terms of biological role, forms part of the ribosomal stalk which helps the ribosome interact with GTP-bound translation factors. The sequence is that of Large ribosomal subunit protein uL11 from Pelodictyon phaeoclathratiforme (strain DSM 5477 / BU-1).